The chain runs to 99 residues: Small ribosomal subunit protein uS14m (99 aa).

Belongs to the universal ribosomal protein uS14 family.

The protein localises to the mitochondrion. In Acanthamoeba castellanii (Amoeba), this protein is Small ribosomal subunit protein uS14m (RPS14).